Here is a 557-residue protein sequence, read N- to C-terminus: DNA replication factor Cdt1 (557 aa).

Positions 1-25 (MAQSRVTDFYACRRPGLTTPRAKSI) match the PIP-box K+4 motif motif. Residues 20–113 (PRAKSICLTP…VCPSPVKRTK (94 aa)) are disordered. Thr28 bears the Phosphothreonine; by MAPK8 mark. Position 30 is a phosphoserine (Ser30). The Cyclin-binding motif motif lies at 65–67 (RRL). Residues 69-81 (LPGLDSCPSSLPE) are compositionally biased toward low complexity. A compositionally biased stretch (pro residues) spans 82–106 (PSSPAEPSPPADPSPPADPGSPVCP). Ser107 is modified (phosphoserine; by MAPK8). The interval 163-203 (PSTPDAKVPTEQPCVEKAPAYQRFHALAQPGLPGLVLPYKY) is interaction with GMNN. The residue at position 392 (Ser392) is a Phosphoserine. The disordered stretch occupies residues 397 to 427 (RSAEPGSPGTSTPPLPATPPATPPAASPSAL). A compositionally biased stretch (pro residues) spans 407 to 422 (STPPLPATPPATPPAA). An interaction with LRWD1 region spans residues 463-557 (LERLPELARV…LAHHVHAEGL (95 aa)).

This sequence belongs to the Cdt1 family. As to quaternary structure, interacts with GMNN; the interaction inhibits the binding of the MCM complex to origins of replication. Interacts with MCM6. Interacts with CDC6; are mutually dependent on one another for loading MCM complexes onto chromatin. Interacts with PCNA. Interacts with LRWD1 during G1 phase and during mitosis. Interacts with NDC80 subunit of the NDC80 complex; leading to kinetochore localization. Interacts with KAT7. Interacts with ubiquitin-binding protein FAF1; the interaction is likely to promote CDT1 degradation. In terms of processing, two independent E3 ubiquitin ligase complexes, SCF(SKP2) and the DCX(DTL) complex, mediated CDT1 degradation in S phase. Ubiquitinated by the DCX(DTL) complex, in response to DNA damage, leading to its degradation. Ubiquitination by the DCX(DTL) complex is necessary to ensure proper cell cycle regulation and is PCNA-dependent: interacts with PCNA via its PIP-box, while the presence of the containing the 'K+4' motif in the PIP box, recruit the DCX(DTL) complex, leading to its degradation. Phosphorylation at Thr-28 by CDK2 targets CDT1 for ubiquitynation by SCF(SKP2) E3 ubiquitin ligase and subsequent degradation. The interaction with GMNN protects it against ubiquitination. Deubiquitinated by USP37. Ubiquitinated and degraded by the SCF(FBXO31) complex during the G2 phase to prevent re-replication. Post-translationally, phosphorylation by cyclin A-dependent kinases at Thr-28 targets CDT1 for ubiquitynation by SCF(SKP2) E3 ubiquitin ligase and subsequent degradation. Phosphorylated at Thr-28 by MAPK8/JNK1, which blocks replication licensing in response to stress. Binding to GMNN is not affected by phosphorylation.

It is found in the nucleus. The protein localises to the chromosome. The protein resides in the centromere. Its subcellular location is the kinetochore. Required for both DNA replication and mitosis. DNA replication licensing factor, required for pre-replication complex assembly. Cooperates with CDC6 and the origin recognition complex (ORC) during G1 phase of the cell cycle to promote the loading of the mini-chromosome maintenance (MCM) complex onto DNA to generate pre-replication complexes (pre-RC). Required also for mitosis by promoting stable kinetochore-microtubule attachments. Potential oncogene. This Mus musculus (Mouse) protein is DNA replication factor Cdt1.